The chain runs to 715 residues: Polyribonucleotide nucleotidyltransferase (715 aa).

Mg(2+) is bound by residues Asp-495 and Asp-501. Positions 562–621 (PRLLTLQIPPDMIGLVIGPGGKTVRGISEQYNVKVDISEEGLVTITAPNETNAKQARAAI) constitute a KH domain. One can recognise an S1 motif domain in the interval 631-699 (GDVYLGRVTR…SKGRINLTRL (69 aa)).

It belongs to the polyribonucleotide nucleotidyltransferase family. Mg(2+) serves as cofactor.

Its subcellular location is the cytoplasm. It catalyses the reaction RNA(n+1) + phosphate = RNA(n) + a ribonucleoside 5'-diphosphate. In terms of biological role, involved in mRNA degradation. Catalyzes the phosphorolysis of single-stranded polyribonucleotides processively in the 3'- to 5'-direction. In Thermosynechococcus vestitus (strain NIES-2133 / IAM M-273 / BP-1), this protein is Polyribonucleotide nucleotidyltransferase.